Here is a 273-residue protein sequence, read N- to C-terminus: 4-hydroxy-tetrahydrodipicolinate reductase (273 aa).

NAD(+) contacts are provided by residues 11 to 16 (GAGGRM) and glutamate 36. Arginine 37 serves as a coordination point for NADP(+). Residues 100-102 (GTT) and 124-127 (AANY) contribute to the NAD(+) site. The active-site Proton donor/acceptor is the histidine 157. (S)-2,3,4,5-tetrahydrodipicolinate is bound at residue histidine 158. The Proton donor role is filled by lysine 161. 167-168 (GT) is a binding site for (S)-2,3,4,5-tetrahydrodipicolinate.

This sequence belongs to the DapB family.

It localises to the cytoplasm. It catalyses the reaction (S)-2,3,4,5-tetrahydrodipicolinate + NAD(+) + H2O = (2S,4S)-4-hydroxy-2,3,4,5-tetrahydrodipicolinate + NADH + H(+). It carries out the reaction (S)-2,3,4,5-tetrahydrodipicolinate + NADP(+) + H2O = (2S,4S)-4-hydroxy-2,3,4,5-tetrahydrodipicolinate + NADPH + H(+). It participates in amino-acid biosynthesis; L-lysine biosynthesis via DAP pathway; (S)-tetrahydrodipicolinate from L-aspartate: step 4/4. Catalyzes the conversion of 4-hydroxy-tetrahydrodipicolinate (HTPA) to tetrahydrodipicolinate. The protein is 4-hydroxy-tetrahydrodipicolinate reductase of Acinetobacter baumannii (strain ACICU).